The sequence spans 67 residues: Non-specific lipid-transfer protein 2P (67 aa).

4 disulfides stabilise this stretch: Cys-2–Cys-34, Cys-10–Cys-24, Cys-25–Cys-60, and Cys-36–Cys-67.

Transfer lipids across membranes. May play a role in plant defense or in the biosynthesis of cuticle layers. The polypeptide is Non-specific lipid-transfer protein 2P (Triticum aestivum (Wheat)).